We begin with the raw amino-acid sequence, 166 residues long: Phospholipase A2 inhibitor clone 04 (166 aa).

Residues 1–19 (MRLILLSSLLLLGIFLANG) form the signal peptide. Positions 46–161 (LKDAFLTVHR…CDDNRLVVCE (116 aa)) constitute a C-type lectin domain. 2 disulfides stabilise this stretch: Cys83/Cys160 and Cys138/Cys152. Asn122 carries N-linked (GlcNAc...) asparagine glycosylation.

It belongs to the alpha-type phospholipase A2 inhibitor family. Homotrimer; non-covalently linked. In terms of tissue distribution, expressed by the liver.

Its subcellular location is the secreted. Its function is as follows. This phospholipase A2 inhibitor binds directly phospholipase A2 in the presence or absence of calcium. The sequence is that of Phospholipase A2 inhibitor clone 04 from Bothrops moojeni (Lance-headed viper).